Consider the following 390-residue polypeptide: S-adenosylmethionine synthase 1 (390 aa).

Glutamate 9 contacts Mg(2+). Histidine 15 lines the ATP pocket. Glutamate 43 is a binding site for K(+). Glutamate 56 and glutamine 99 together coordinate L-methionine. ATP-binding positions include 167-169, 235-238, aspartate 246, 252-253, alanine 269, lysine 273, and lysine 277; these read DGK, SGRF, and RK. Position 246 (aspartate 246) interacts with L-methionine. An L-methionine-binding site is contributed by lysine 277.

This sequence belongs to the AdoMet synthase family. Homotetramer. Mn(2+) is required as a cofactor. Mg(2+) serves as cofactor. Requires Co(2+) as cofactor. The cofactor is K(+).

It is found in the cytoplasm. The enzyme catalyses L-methionine + ATP + H2O = S-adenosyl-L-methionine + phosphate + diphosphate. It participates in amino-acid biosynthesis; S-adenosyl-L-methionine biosynthesis; S-adenosyl-L-methionine from L-methionine: step 1/1. Functionally, catalyzes the formation of S-adenosylmethionine from methionine and ATP. The reaction comprises two steps that are both catalyzed by the same enzyme: formation of S-adenosylmethionine (AdoMet) and triphosphate, and subsequent hydrolysis of the triphosphate. This is S-adenosylmethionine synthase 1 (SAMS1) from Nicotiana tabacum (Common tobacco).